Reading from the N-terminus, the 270-residue chain is Tetraspanin-14 (270 aa).

Residues 1–17 (MHYYRYSNAKVSCWYKY) are Cytoplasmic-facing. Residues 18–38 (LLFSYNIIFWLAGVVFLGVGL) form a helical membrane-spanning segment. The Extracellular portion of the chain corresponds to 39-61 (WAWSEKGVLSDLTKVTRMHGIDP). A helical membrane pass occupies residues 62–82 (VVLVLMVGVVMFTLGFAGCVG). The Cytoplasmic portion of the chain corresponds to 83–92 (ALRENICLLN). Residues 93-113 (FFCGTIVLIFFLELAVAVLAF) traverse the membrane as a helical segment. At 114 to 232 (LFQDWVRDRF…QALESWLPRN (119 aa)) the chain is on the extracellular side. The tract at residues 114–232 (LFQDWVRDRF…QALESWLPRN (119 aa)) is necessary and sufficient for interaction with ADAM10. 4 disulfide bridges follow: cysteine 153/cysteine 221, cysteine 154/cysteine 186, cysteine 170/cysteine 180, and cysteine 187/cysteine 200. Residue asparagine 169 is glycosylated (N-linked (GlcNAc...) asparagine). Residues 233-253 (IYIVAGVFIAISLLQIFGIFL) traverse the membrane as a helical segment. The Cytoplasmic portion of the chain corresponds to 254–270 (ARTLISDIEAVKAGHHF).

The protein belongs to the tetraspanin (TM4SF) family. In terms of assembly, interacts with ADAM10; the interaction promotes ADAM10 maturation and cell surface expression.

The protein resides in the cell membrane. In terms of biological role, part of TspanC8 subgroup, composed of 6 members that interact with the transmembrane metalloprotease ADAM10. This interaction is required for ADAM10 exit from the endoplasmic reticulum and for enzymatic maturation and trafficking to the cell surface as well as substrate specificity. Different TspanC8/ADAM10 complexes have distinct substrates. Negatively regulates ADAM10-mediated cleavage of GP6. Promotes ADAM10-mediated cleavage of CDH5. This chain is Tetraspanin-14, found in Homo sapiens (Human).